We begin with the raw amino-acid sequence, 380 residues long: Cytochrome b (380 aa).

The next 4 membrane-spanning stretches (helical) occupy residues 33–53 (FGSL…FLAM), 77–98 (WMIR…FLHI), 113–133 (WNIG…GYVL), and 178–198 (FFTL…LHLL). Residues His83 and His97 each coordinate heme b. Heme b-binding residues include His182 and His196. His201 lines the a ubiquinone pocket. Transmembrane regions (helical) follow at residues 226 to 246 (IKDI…TLLS), 288 to 308 (LGGV…PALH), 320 to 340 (LSQF…WIGG), and 347 to 367 (FITI…LLMP).

This sequence belongs to the cytochrome b family. The cytochrome bc1 complex contains 11 subunits: 3 respiratory subunits (MT-CYB, CYC1 and UQCRFS1), 2 core proteins (UQCRC1 and UQCRC2) and 6 low-molecular weight proteins (UQCRH/QCR6, UQCRB/QCR7, UQCRQ/QCR8, UQCR10/QCR9, UQCR11/QCR10 and a cleavage product of UQCRFS1). This cytochrome bc1 complex then forms a dimer. It depends on heme b as a cofactor.

Its subcellular location is the mitochondrion inner membrane. Its function is as follows. Component of the ubiquinol-cytochrome c reductase complex (complex III or cytochrome b-c1 complex) that is part of the mitochondrial respiratory chain. The b-c1 complex mediates electron transfer from ubiquinol to cytochrome c. Contributes to the generation of a proton gradient across the mitochondrial membrane that is then used for ATP synthesis. In Pongo abelii (Sumatran orangutan), this protein is Cytochrome b (MT-CYB).